Consider the following 312-residue polypeptide: DNA-directed RNA polymerase subunit alpha (312 aa).

The interval 1-226 (MIEFEKPKIT…DHLNLFVDLS (226 aa)) is alpha N-terminal domain (alpha-NTD). The tract at residues 243–312 (TERVLDKIIE…ELGLSLKKRK (70 aa)) is alpha C-terminal domain (alpha-CTD).

The protein belongs to the RNA polymerase alpha chain family. Homodimer. The RNAP catalytic core consists of 2 alpha, 1 beta, 1 beta' and 1 omega subunit. When a sigma factor is associated with the core the holoenzyme is formed, which can initiate transcription.

It catalyses the reaction RNA(n) + a ribonucleoside 5'-triphosphate = RNA(n+1) + diphosphate. In terms of biological role, DNA-dependent RNA polymerase catalyzes the transcription of DNA into RNA using the four ribonucleoside triphosphates as substrates. The sequence is that of DNA-directed RNA polymerase subunit alpha from Lactococcus lactis subsp. cremoris (strain MG1363).